Reading from the N-terminus, the 164-residue chain is Elicitin-like protein 2 (164 aa).

The first 22 residues, 1–22 (MFSKTLVVLAAVAAVTVNGLTA), serve as a signal peptide directing secretion. 3 cysteine pairs are disulfide-bonded: Cys-25–Cys-91, Cys-47–Cys-76, and Cys-71–Cys-118. Positions 121-164 (ISGGGSTPTTAPPSGTTPTTPTTAPPTGTTPGVTPSPTTPKPAC) are disordered. The span at 127–156 (TPTTAPPSGTTPTTPTTAPPTGTTPGVTPS) shows a compositional bias: low complexity.

It belongs to the elicitin family.

It localises to the secreted. Its function is as follows. Induces local and distal defense responses (incompatible hypersensitive reaction) in plants from the solanaceae and cruciferae families. Elicits leaf necrosis and causes the accumulation of pathogenesis-related proteins. Might interact with the lipidic molecules of the plasma membrane. In Pythium oligandrum (Mycoparasitic fungus), this protein is Elicitin-like protein 2 (POD-2).